Reading from the N-terminus, the 670-residue chain is Proline-rich receptor-like protein kinase PERK5 (670 aa).

The disordered stretch occupies residues 1-181 (MADSPVDSSP…SGDSDSSSGN (181 aa)). Residues 1–186 (MADSPVDSSP…SSSGNHPQAN (186 aa)) lie on the Extracellular side of the membrane. A compositionally biased stretch (low complexity) spans 14 to 31 (TSNGTPPSNGTSPSNESS). N-linked (GlcNAc...) asparagine glycans are attached at residues N22 and N28. Pro residues-rich tracts occupy residues 32–62 (PPTP…PAPP) and 84–109 (PQTP…PPQT). N-linked (GlcNAc...) asparagine glycosylation is present at N130. Over residues 132-141 (TNGGNNNRDG) the composition is skewed to low complexity. Residue N151 is glycosylated (N-linked (GlcNAc...) asparagine). The segment covering 167–181 (SPPQNSGDSDSSSGN) has biased composition (low complexity). Residues 187–207 (IGLIIGVLVGAGLLLLLAVCI) form a helical membrane-spanning segment. At 208 to 670 (CICCNRKKKK…RGSMKRNPQL (463 aa)) the chain is on the cytoplasmic side. At T301 the chain carries Phosphothreonine. Residues 312 to 590 (FAQSNLLGQG…VRALEGDMSM (279 aa)) form the Protein kinase domain. ATP contacts are provided by residues 318-326 (LGQGGFGYV) and K340. A Phosphotyrosine modification is found at Y385. D436 functions as the Proton acceptor in the catalytic mechanism. At S469 the chain carries Phosphoserine. Phosphothreonine occurs at positions 470 and 475. Y483 is modified (phosphotyrosine). 2 disordered regions span residues 589–613 (SMDD…VSSE) and 635–670 (EYQS…NPQL). Residues 599-613 (PGQSTYLSPGSVSSE) are compositionally biased toward polar residues.

The protein belongs to the protein kinase superfamily. Ser/Thr protein kinase family. As to expression, mostly expressed in flower buds.

It localises to the cell membrane. The enzyme catalyses L-seryl-[protein] + ATP = O-phospho-L-seryl-[protein] + ADP + H(+). The catalysed reaction is L-threonyl-[protein] + ATP = O-phospho-L-threonyl-[protein] + ADP + H(+). The protein is Proline-rich receptor-like protein kinase PERK5 (PERK5) of Arabidopsis thaliana (Mouse-ear cress).